The primary structure comprises 91 residues: Small ribosomal subunit protein bS16 (91 aa).

Belongs to the bacterial ribosomal protein bS16 family.

In Staphylococcus epidermidis (strain ATCC 35984 / DSM 28319 / BCRC 17069 / CCUG 31568 / BM 3577 / RP62A), this protein is Small ribosomal subunit protein bS16.